Here is a 393-residue protein sequence, read N- to C-terminus: Peptidyl-prolyl cis-trans isomerase CYP7 (393 aa).

The PPIase cyclophilin-type domain maps to 8-196 (YLDISIDKKP…SDVRISDCGV (189 aa)). TPR repeat units follow at residues 240 to 273 (ANII…INEY), 292 to 325 (MKIY…DNVP), and 330 to 363 (AKAY…NPDD).

In terms of assembly, interacts with RPD3 and CNS1.

The enzyme catalyses [protein]-peptidylproline (omega=180) = [protein]-peptidylproline (omega=0). Functionally, PPIases accelerate the folding of proteins. It catalyzes the cis-trans isomerization of proline imidic peptide bonds in oligopeptides. Plays a major role in negative regulation of the heat shock transcription factor (HSF). This Saccharomyces cerevisiae (strain ATCC 204508 / S288c) (Baker's yeast) protein is Peptidyl-prolyl cis-trans isomerase CYP7 (CPR7).